Reading from the N-terminus, the 199-residue chain is Recombination protein RecR (199 aa).

The C4-type zinc-finger motif lies at 57–72 (CEICGNLDTKSICHIC). The 96-residue stretch at 80–175 (STIAIVETVA…KISRLASGIP (96 aa)) folds into the Toprim domain.

This sequence belongs to the RecR family.

May play a role in DNA repair. It seems to be involved in an RecBC-independent recombinational process of DNA repair. It may act with RecF and RecO. The polypeptide is Recombination protein RecR (Rickettsia prowazekii (strain Madrid E)).